A 399-amino-acid chain; its full sequence is Aromatic-amino-acid aminotransferase (399 aa).

Residues Gly36, Tyr67, Trp132, and Asn184 each contribute to the substrate site. N6-(pyridoxal phosphate)lysine is present on Lys247. Arg375 contacts substrate.

This sequence belongs to the class-I pyridoxal-phosphate-dependent aminotransferase family. As to quaternary structure, homodimer. Pyridoxal 5'-phosphate is required as a cofactor.

It localises to the cytoplasm. It carries out the reaction an aromatic L-alpha-amino acid + 2-oxoglutarate = an aromatic oxo-acid + L-glutamate. The polypeptide is Aromatic-amino-acid aminotransferase (phhC) (Pseudomonas aeruginosa (strain ATCC 15692 / DSM 22644 / CIP 104116 / JCM 14847 / LMG 12228 / 1C / PRS 101 / PAO1)).